Here is a 220-residue protein sequence, read N- to C-terminus: Germin-like protein subfamily 2 member 4 (220 aa).

The N-terminal stretch at 1 to 21 is a signal peptide; sequence MDSRCFGFFFTLLSLNVIVLA. Cys-31 and Cys-46 are disulfide-bonded. Asn-51 and Asn-69 each carry an N-linked (GlcNAc...) asparagine glycan. One can recognise a Cupin type-1 domain in the interval 58–209; sequence FFAGIGKPAV…TFQIGTKEIE (152 aa). 4 residues coordinate Mn(2+): His-108, His-110, Glu-115, and His-154.

Belongs to the germin family. In terms of assembly, oligomer (believed to be a pentamer but probably hexamer).

It is found in the secreted. It localises to the extracellular space. Its subcellular location is the apoplast. Functionally, may play a role in plant defense. Probably has no oxalate oxidase activity even if the active site is conserved. The chain is Germin-like protein subfamily 2 member 4 (GLP10) from Arabidopsis thaliana (Mouse-ear cress).